The following is a 94-amino-acid chain: Co-chaperonin GroES (94 aa).

A disordered region spans residues 17-53 (DSNPNSPIQLPDSAKKKPTKGKVVSVGPGASNSDGKV).

It belongs to the GroES chaperonin family. As to quaternary structure, heptamer of 7 subunits arranged in a ring. Interacts with the chaperonin GroEL.

Its subcellular location is the cytoplasm. In terms of biological role, together with the chaperonin GroEL, plays an essential role in assisting protein folding. The GroEL-GroES system forms a nano-cage that allows encapsulation of the non-native substrate proteins and provides a physical environment optimized to promote and accelerate protein folding. GroES binds to the apical surface of the GroEL ring, thereby capping the opening of the GroEL channel. The protein is Co-chaperonin GroES of Anaplasma phagocytophilum (strain HZ).